The following is a 727-amino-acid chain: Prolyl endopeptidase-like (727 aa).

An N-acetylmethionine modification is found at Met1. Residues Ser559, Asp645, and His690 each act as charge relay system in the active site.

This sequence belongs to the peptidase S9A family. As to quaternary structure, homodimer. Interacts with the AP-1 complex. As to expression, expressed in pyramidal neurons of the temporal cortex and neocortex (at protein level). Widely expressed. Expressed at higher level in brain, skeletal muscle, heart and kidney. Expressed at the endplates in the neuromuscular junction.

The protein localises to the cytoplasm. The protein resides in the cytosol. Its subcellular location is the golgi apparatus. It is found in the trans-Golgi network. It localises to the cytoskeleton. The protein localises to the nucleus. Its activity is regulated as follows. Inhibited by PMSF and Prefabloc, as well as leupeptin at high concentrations. Partially inhibited by TPCK, a chymotrypsin inhibitor and E64, a cysteine protease inhibitor. Not affected by 4-amidinophenyl-methanesulfonyl fluoride (APMSF), pepstatin or EDTA. Inhibited by 1-isobutyl-3-oxo-3,5,6,7-tetrahydro-2H-cyclopenta[c]pyridine-4-carbonitrile. Functionally, serine peptidase whose precise substrate specificity remains unclear. Does not cleave peptides after a arginine or lysine residue. Regulates trans-Golgi network morphology and sorting by regulating the membrane binding of the AP-1 complex. May play a role in the regulation of synaptic vesicle exocytosis. This chain is Prolyl endopeptidase-like (PREPL), found in Homo sapiens (Human).